A 372-amino-acid chain; its full sequence is Formylglycine-generating enzyme (372 aa).

The N-terminal stretch at 1-31 is a signal peptide; it reads MAAPAREPALRCCIRLARVFLLLVLACEVAG. Cysteines 48 and 50 form a disulfide. The disordered stretch occupies residues 61 to 80; the sequence is SSAAAQRYSREANAPGLTSG. Glutamate 128 lines the Ca(2+) pocket. A glycan (N-linked (GlcNAc...) asparagine) is linked at asparagine 139. Intrachain disulfides connect cysteine 216-cysteine 363 and cysteine 233-cysteine 344. Residues asparagine 257, isoleucine 258, aspartate 271, phenylalanine 273, asparagine 291, glycine 294, and glutamate 298 each coordinate Ca(2+). Cysteine 334 and cysteine 339 together coordinate Cu(2+). Residues 339–358 form an interaction with sulfatases region; sequence CYRYRCAARSQNTPDSSASN.

It belongs to the sulfatase-modifying factor family. In terms of assembly, monomer, homodimer and heterodimer with SUMF2. It depends on Cu(2+) as a cofactor. N-glycosylated. Contains high-mannose-type oligosaccharides.

The protein localises to the endoplasmic reticulum lumen. The enzyme catalyses L-cysteinyl-[sulfatase] + 2 a thiol + O2 = an organic disulfide + 3-oxo-L-alanyl-[sulfatase] + hydrogen sulfide + H2O + H(+). The protein operates within protein modification; sulfatase oxidation. Oxidase that catalyzes the conversion of cysteine to 3-oxoalanine on target proteins, using molecular oxygen and an unidentified reducing agent. 3-oxoalanine modification, which is also named formylglycine (fGly), occurs in the maturation of arylsulfatases and some alkaline phosphatases that use the hydrated form of 3-oxoalanine as a catalytic nucleophile. Known substrates include GALNS, ARSA, STS and ARSE. In Mus musculus (Mouse), this protein is Formylglycine-generating enzyme.